We begin with the raw amino-acid sequence, 964 residues long: Integrator complex subunit 4 (964 aa).

Lys27 bears the N6-acetyllysine mark. HEAT repeat units follow at residues 67-106 (AESV…TAGF), 146-184 (QATQ…LEKS), 191-229 (GSAA…RGLK), 230-264 (LHQT…SQLY), 278-314 (IRLV…EQVS), 370-406 (NLIE…AQSS), 407-445 (PSFA…NITL), and 447-485 (EDQL…GIHL). Lys792 is covalently cross-linked (Glycyl lysine isopeptide (Lys-Gly) (interchain with G-Cter in SUMO1); alternate). Residue Lys792 forms a Glycyl lysine isopeptide (Lys-Gly) (interchain with G-Cter in SUMO2); alternate linkage.

It belongs to the Integrator subunit 4 family. As to quaternary structure, component of the Integrator complex, composed of core subunits INTS1, INTS2, INTS3, INTS4, INTS5, INTS6, INTS7, INTS8, INTS9/RC74, INTS10, INTS11/CPSF3L, INTS12, INTS13, INTS14 and INTS15. The core complex associates with protein phosphatase 2A subunits PPP2CA and PPP2R1A, to form the Integrator-PP2A (INTAC) complex. INTS4 is part of the RNA endonuclease subcomplex, composed of INTS4, INTS9, INTS11 and inositol hexakisphosphate (InsP6). Interacts with BRAT1; interaction is required for the assembly of the RNA endonuclease subcomplex.

The protein resides in the nucleus. The protein localises to the cytoplasm. In terms of biological role, component of the integrator complex, a multiprotein complex that terminates RNA polymerase II (Pol II) transcription in the promoter-proximal region of genes. The integrator complex provides a quality checkpoint during transcription elongation by driving premature transcription termination of transcripts that are unfavorably configured for transcriptional elongation: the complex terminates transcription by (1) catalyzing dephosphorylation of the C-terminal domain (CTD) of Pol II subunit POLR2A/RPB1 and SUPT5H/SPT5, (2) degrading the exiting nascent RNA transcript via endonuclease activity and (3) promoting the release of Pol II from bound DNA. The integrator complex is also involved in terminating the synthesis of non-coding Pol II transcripts, such as enhancer RNAs (eRNAs), small nuclear RNAs (snRNAs), telomerase RNAs and long non-coding RNAs (lncRNAs). Within the integrator complex, INTS4 acts as an scaffold that links INTS9 and INTS11. Mediates recruitment of cytoplasmic dynein to the nuclear envelope, probably as component of the integrator complex. The polypeptide is Integrator complex subunit 4 (Ints4) (Mus musculus (Mouse)).